A 508-amino-acid chain; its full sequence is Fasciclin-3 (508 aa).

Positions Met1 to Ala20 are cleaved as a signal peptide. Position 21 is a pyrrolidone carboxylic acid (Gln21). The Extracellular segment spans residues Gln21 to Asp346. The region spanning Gly44–Val106 is the Ig-like V-type domain. Ig-like C2-type domains follow at residues Pro126–Pro223 and Ala236–Leu310. A disulfide bond links Cys150 and Cys211. 3 N-linked (GlcNAc...) asparagine glycosylation sites follow: Asn160, Asn257, and Asn300. The helical transmembrane segment at Val347–Ala370 threads the bilayer. At Arg371–Lys508 the chain is on the cytoplasmic side. The segment at Lys381 to Lys439 is disordered. Ser382 bears the Phosphoserine mark. Low complexity-rich tracts occupy residues Ala400–Thr409 and Glu425–Gln437. Phosphoserine is present on Ser459.

Expressed on different subsets of axon bundles (fascicles) in insect embryos.

It is found in the membrane. In terms of biological role, mediates cell adhesion in a Ca(2+)-independent manner. It plays a role in axon outgrowth, guidance and fasciculation of the developing nervous system. Function in neurons is essential for adult survival, and is important for climbing behavior and activity. The protein is Fasciclin-3 (Fas3) of Drosophila melanogaster (Fruit fly).